Reading from the N-terminus, the 53-residue chain is Sec-independent protein translocase protein TatA (53 aa).

A helical membrane pass occupies residues 1–21 (MGMSFSHLLIVLLIIFVLFGA).

The protein belongs to the TatA/E family. As to quaternary structure, the Tat system comprises two distinct complexes: a TatABC complex, containing multiple copies of TatA, TatB and TatC subunits, and a separate TatA complex, containing only TatA subunits. Substrates initially bind to the TatABC complex, which probably triggers association of the separate TatA complex to form the active translocon.

It is found in the cell inner membrane. Its function is as follows. Part of the twin-arginine translocation (Tat) system that transports large folded proteins containing a characteristic twin-arginine motif in their signal peptide across membranes. TatA could form the protein-conducting channel of the Tat system. This Rickettsia rickettsii (strain Iowa) protein is Sec-independent protein translocase protein TatA.